The chain runs to 839 residues: Transient receptor potential cation channel subfamily V member 1 (839 aa).

Residues 1–60 (MEKWASLDSDESEPPAQENSCPDPPDRDPNSKPPPAKPHIFATRSRTRLFGKGDSEEASP) are disordered. Residues 1 to 433 (MEKWASLDSD…QDKWDRFVKR (433 aa)) are Cytoplasmic-facing. The ANK 1 repeat unit spans residues 111-139 (RLYDRRSIFDAVAQSNCQELESLLSFLQK). Arginine 116 serves as a coordination point for ATP. Position 117 is a phosphoserine; by PKA and PKD (serine 117). A Phosphothreonine; by PKA; in vitro modification is found at threonine 145. Residues 154–186 (TGKTCLLKAMLNLHNGQNDTIALLLDIARKTDS) form an ANK 2 repeat. Residues lysine 156, lysine 161, asparagine 165, 200 to 203 (YKGQ), and 211 to 212 (ER) contribute to the ATP site. 4 ANK repeats span residues 204–229 (TALH…ADVQ), 250–277 (ELPL…QPAD), 286–322 (NTVL…KLHP), and 336–359 (TPLA…REIH). Threonine 371 carries the phosphothreonine; by PKA; in vitro modification. The ANK 7 repeat unit spans residues 394–416 (NSVLEVIAYSSSETPNRHDMLLV). Residues 434–455 (IFYFNFFVYCLYMIIFTTAAYY) traverse the membrane as a helical segment. Residues 456–472 (RPVEGLPPYKLNNTVGD) lie on the Extracellular side of the membrane. Residues 473 to 497 (YFRVTGEILSVSGGVYFFFRGIQYF) form a helical membrane-spanning segment. At 498–510 (LQRRPSLKSLFVD) the chain is on the cytoplasmic side. Position 503 is a phosphoserine; by PKC/PRKCE (serine 503). The chain crosses the membrane as a helical span at residues 511–532 (SYSEILFFVQSLFMLVSVVLYF). Resiniferatoxin is bound at residue 512–513 (YS). Residues 533–535 (SHR) are Extracellular-facing. A helical membrane pass occupies residues 536–556 (KEYVASMVFSLAMGWTNMLYY). Residues threonine 551 and arginine 558 each coordinate resiniferatoxin. Topologically, residues 557–559 (TRG) are cytoplasmic. A helical transmembrane segment spans residues 560-598 (FQQMGIYAVMIEKMILRDLCRFMFVYLVFLFGFSTAVVT). At 599–630 (LIEDGKNNSLPVESPPHKCRGSACRPGNSYNS) the chain is on the extracellular side. Asparagine 605 carries an N-linked (GlcNAc...) asparagine glycan. Residues 631–652 (LYSTCLELFKFTIGMGDLEFTE) constitute an intramembrane region (pore-forming). Glycine 644 provides a ligand contact to Na(+). Positions 644 to 647 (GMGD) match the Selectivity filter motif. Aspartate 647 is a binding site for Ca(2+). The Extracellular portion of the chain corresponds to 653–656 (NYDF). A helical transmembrane segment spans residues 657–683 (KAVFIILLLAYVILTYILLLNMLIALM). Residues 684–839 (GETVNKIAQE…FKDSMAPGEK (156 aa)) lie on the Cytoplasmic side of the membrane. Residues 685–713 (ETVNKIAQESKNIWKLQRAITILDTEKSF) are AD. At threonine 705 the chain carries Phosphothreonine. An interaction with calmodulin region spans residues 768-802 (EGVKRTLSFSLRSGRVSGRNWKNFALVPLLRDAST). Serine 775 is modified (phosphoserine). The tract at residues 778 to 793 (LRSGRVSGRNWKNFAL) is required for PIP2-mediated channel inhibition. Serine 801 bears the Phosphoserine; by PKC/PRKCE and PKC/PRKCZ mark. A compositionally biased stretch (basic and acidic residues) spans 802-815 (TRDRHSTQPEEVQL). The disordered stretch occupies residues 802–839 (TRDRHSTQPEEVQLKHYTGSLKPEDAEVFKDSMAPGEK). A Phosphoserine modification is found at serine 821. The span at 823-839 (KPEDAEVFKDSMAPGEK) shows a compositional bias: basic and acidic residues.

This sequence belongs to the transient receptor (TC 1.A.4) family. TrpV subfamily. TRPV1 sub-subfamily. Homotetramer. May also form a heteromeric channel with TRPV3. Interacts with CALM, PRKCM and CSK. Interacts with PRKCG and NTRK1, probably by forming a trimeric complex. Interacts with PIRT. Interacts with the Scolopendra mutilans RhTx toxin. Interacts with TMEM100. Interacts with PACS2. Phosphorylation by PKA reverses capsaicin-induced dephosphorylation at multiple sites probably including Ser-117 as a major phosphorylation site. Phosphorylation by CAMKII seems to regulate binding to vanilloids. Phosphorylated and modulated by PRKCE, PRKCM and probably PRKCZ. Dephosphorylation by calcineurin seems to lead to receptor desensitization and phosphorylation by CAMKII recovers activity. As to expression, detected in neurons in the root ganglia (at protein level). Detected in dorsal root ganglia.

It is found in the postsynaptic cell membrane. The protein localises to the cell projection. The protein resides in the dendritic spine membrane. It localises to the cell membrane. It carries out the reaction Ca(2+)(in) = Ca(2+)(out). The catalysed reaction is Mg(2+)(in) = Mg(2+)(out). It catalyses the reaction Na(+)(in) = Na(+)(out). The enzyme catalyses K(+)(in) = K(+)(out). The channel is sensitized by ATP binding. Repeated stimulation with capsaicin gives rise to progressively smaller responses, due to desensitization. This desensitization is triggered by the influx of calcium ions and is inhibited by elevated ATP levels. Ca(2+) and CALM displace ATP from its binding site and trigger a conformation change that leads to a closed, desensitized channel. The double-knot toxin (DkTx) from the Chinese earth tiger tarantula activates the channel and traps it in an open conformation. The Scolopendra mutilans RhTx toxin potentiates the heat activation pathway mediated by this channel by binding to the charge-rich outer pore region (in an activated state). Channel activity is activated via the interaction with PIRT and phosphatidylinositol 4,5-bisphosphate (PIP2). Both PIRT and PIP2 are required to activate channel activity. Intracellular PIP2 inhibits desensitization. Non-selective calcium permeant cation channel involved in detection of noxious chemical and thermal stimuli. Seems to mediate proton influx and may be involved in intracellular acidosis in nociceptive neurons. Involved in mediation of inflammatory pain and hyperalgesia. Sensitized by a phosphatidylinositol second messenger system activated by receptor tyrosine kinases, which involves PKC isozymes and PCL. Activation by vanilloids, like capsaicin, and temperatures higher than 42 degrees Celsius. Upon activation, exhibits a time- and Ca(2+)-dependent outward rectification, followed by a long-lasting refractory state. Mild extracellular acidic pH (6.5) potentiates channel activation by noxious heat and vanilloids, whereas acidic conditions (pH &lt;6) directly activate the channel. Can be activated by endogenous compounds, including 12-hydroperoxytetraenoic acid and bradykinin. Acts as ionotropic endocannabinoid receptor with central neuromodulatory effects. Triggers a form of long-term depression (TRPV1-LTD) mediated by the endocannabinoid anandamine in the hippocampus and nucleus accumbens by affecting AMPA receptors endocytosis. This is Transient receptor potential cation channel subfamily V member 1 (Trpv1) from Mus musculus (Mouse).